Reading from the N-terminus, the 577-residue chain is Aspartate--tRNA(Asp/Asn) ligase (577 aa).

Glu-171 contacts L-aspartate. Positions 195-198 (QLFK) are aspartate. Arg-217 is an L-aspartate binding site. Residues 217–219 (RDE) and Gln-226 each bind ATP. Residue His-444 participates in L-aspartate binding. Glu-474 is a binding site for ATP. L-aspartate is bound at residue Arg-481. Position 526–529 (526–529 (GFDR)) interacts with ATP.

Belongs to the class-II aminoacyl-tRNA synthetase family. Type 1 subfamily. Homodimer.

The protein localises to the cytoplasm. It catalyses the reaction tRNA(Asx) + L-aspartate + ATP = L-aspartyl-tRNA(Asx) + AMP + diphosphate. In terms of biological role, aspartyl-tRNA synthetase with relaxed tRNA specificity since it is able to aspartylate not only its cognate tRNA(Asp) but also tRNA(Asn). Reaction proceeds in two steps: L-aspartate is first activated by ATP to form Asp-AMP and then transferred to the acceptor end of tRNA(Asp/Asn). This chain is Aspartate--tRNA(Asp/Asn) ligase, found in Helicobacter pylori (strain Shi470).